We begin with the raw amino-acid sequence, 93 residues long: uncharacterized protein (93 aa).

The first 22 residues, M1–S22, serve as a signal peptide directing secretion.

This is an uncharacterized protein from Escherichia coli (strain K12).